A 596-amino-acid chain; its full sequence is Bromodomain-containing protein 9 (596 aa).

The span at 1-10 (MGKKHKKHKA) shows a compositional bias: basic residues. Disordered regions lie at residues 1 to 26 (MGKK…PLEK) and 38 to 137 (EVTE…AENE). The span at 50–62 (SYYDDRSDHERER) shows a compositional bias: basic and acidic residues. Ser56 carries the post-translational modification Phosphoserine. Positions 63-73 (HREKKKKKKKK) are enriched in basic residues. Basic and acidic residues predominate over residues 74-85 (SEKEKHLDEEER). The span at 86–97 (RKRKEEKKRKRE) shows a compositional bias: basic residues. Residues 111–126 (DPGKKVEVEPPPDRPV) show a composition bias toward basic and acidic residues. One can recognise a Bromo domain in the interval 136-240 (NESTPIQRLL…HAGFKMMSKA (105 aa)). The interval 214–216 (TYN) is histone H4K5ac H4K8ac and histone H4K5bu H4K8bu binding. Lys372 bears the N6-acetyllysine; alternate mark. Lys372 participates in a covalent cross-link: Glycyl lysine isopeptide (Lys-Gly) (interchain with G-Cter in SUMO2); alternate. Residues 536-596 (AQAERGGSRP…SPEPAAPAKN (61 aa)) form a disordered region. Residues 543–555 (SRPSSNLSSLSTA) are compositionally biased toward low complexity. Phosphoserine is present on residues Ser565 and Ser587.

Binds acetylated histones H3 and H4. Binds butyrylated histone H4. Component of the multiprotein chromatin-remodeling subcomplex SWI/SNF called GBAF, which includes at least BICRA or BICRAL (mutually exclusive), BRD9, SS18, the core BAF subunits, SMARCA2/BRM, SMARCA4/BRG1/BAF190A, ACTL6A/BAF53, SMARCC1/BAF155, and SMARCD1/BAF60A. Interacts (via N-terminal bromodomain) with acetylated RAD54. Interacts (via C-terminus) with RAD51.

It is found in the nucleus. Plays a role in chromatin remodeling and regulation of transcription. Acts as a chromatin reader that recognizes and binds acylated histones: binds histones that are acetylated and/or butyrylated. Component of SWI/SNF chromatin remodeling subcomplex GBAF that carries out key enzymatic activities, changing chromatin structure by altering DNA-histone contacts within a nucleosome in an ATP-dependent manner. Also orchestrates the RAD51-RAD54 complex formation and thereby plays a role in homologous recombination (HR). The chain is Bromodomain-containing protein 9 (Brd9) from Mus musculus (Mouse).